The chain runs to 239 residues: NAD-dependent protein deacylase (239 aa).

In terms of domain architecture, Deacetylase sirtuin-type spans 1-234 (MENLNIVTLT…KKVYDYLREK (234 aa)). NAD(+) contacts are provided by residues 11 to 30 (GAGI…DGLW) and 89 to 92 (QNVD). The active-site Proton acceptor is the histidine 107. Zn(2+) is bound by residues cysteine 115, cysteine 118, cysteine 136, and cysteine 139. Residues 176 to 178 (GTS), 202 to 204 (NPE), and alanine 220 contribute to the NAD(+) site.

Belongs to the sirtuin family. Class III subfamily. Requires Zn(2+) as cofactor.

The protein resides in the cytoplasm. It catalyses the reaction N(6)-acetyl-L-lysyl-[protein] + NAD(+) + H2O = 2''-O-acetyl-ADP-D-ribose + nicotinamide + L-lysyl-[protein]. Its function is as follows. NAD-dependent protein deacetylase which modulates the activities of several proteins which are inactive in their acetylated form. The polypeptide is NAD-dependent protein deacylase (Aquifex aeolicus (strain VF5)).